Reading from the N-terminus, the 445-residue chain is MSFRSIVRDVRDGFGSLSRRGFEVRLVGHRRGRSHSAVHELRDGHAAAAAADVVQSSCWANLPPELLRDVIERLEASEAAWPSRKNVVACAAVCRTWRDMCREIVKNPEFCGKITFPVSLKQPGPRNGAIQCFIKRDKSTQTYNLYLCLSSAVLVESGKFLLSAKRYSRATCTEYTIFMSADNTSRSSNMYIGKLRSNLLGTKFVIYDTQPPCNTANVSQSGKTSRRFYSRKVSPKNPSSTYSIAQVSYELNVLGTRGPRRMNCVMHSIPASSLEAGGTVPCQPDSVLARSLDESFGSISFSKSSIMDRSIRFSSSRYSDISVGGPMVGGQALGDSDESKERPLILRNKAPRWHEQLQCWCLNFKGRVTVASVKNFQLVAATQPAAGAPTPSQPAPPPPPDHDKVILQFGKVAKDMFTMDYRYPLSAFQAFAICLSSFDTKLACE.

The F-box domain maps to 56 to 114; that stretch reads SSCWANLPPELLRDVIERLEASEAAWPSRKNVVACAAVCRTWRDMCREIVKNPEFCGKI.

It belongs to the TUB family. Ubiquitous.

The protein is Tubby-like F-box protein 14 (TULP14) of Oryza sativa subsp. japonica (Rice).